The sequence spans 213 residues: Uridine kinase (213 aa).

Residue 14 to 21 coordinates ATP; that stretch reads GASASGKS.

It belongs to the uridine kinase family.

It localises to the cytoplasm. The catalysed reaction is uridine + ATP = UMP + ADP + H(+). It carries out the reaction cytidine + ATP = CMP + ADP + H(+). It functions in the pathway pyrimidine metabolism; CTP biosynthesis via salvage pathway; CTP from cytidine: step 1/3. The protein operates within pyrimidine metabolism; UMP biosynthesis via salvage pathway; UMP from uridine: step 1/1. This is Uridine kinase from Vibrio atlanticus (strain LGP32) (Vibrio splendidus (strain Mel32)).